Reading from the N-terminus, the 631-residue chain is Probable potassium transport system protein Kup 1 (631 aa).

A run of 12 helical transmembrane segments spans residues 17 to 37 (LALG…LYAL), 55 to 75 (LSLI…MIIF), 101 to 121 (PLFY…GMLT), 140 to 160 (LYPY…SLQA), 166 to 186 (IGYL…ILGI), 217 to 237 (FLLG…ADIG), 249 to 269 (FFIA…NLIV), 277 to 297 (PFFM…ATVA), 338 to 358 (IYVP…CLAF), 370 to 390 (IAVN…AVSI), 395 to 415 (TFNV…FLGA), and 420 to 440 (FITG…IMYS).

This sequence belongs to the HAK/KUP transporter (TC 2.A.72) family.

The protein resides in the cell inner membrane. It carries out the reaction K(+)(in) + H(+)(in) = K(+)(out) + H(+)(out). In terms of biological role, transport of potassium into the cell. Likely operates as a K(+):H(+) symporter. In Legionella pneumophila (strain Corby), this protein is Probable potassium transport system protein Kup 1.